The primary structure comprises 323 residues: tRNA dimethylallyltransferase (323 aa).

An ATP-binding site is contributed by 18 to 25 (GPTASGKT). Residue 20 to 25 (TASGKT) coordinates substrate. The interval 44-47 (DSAL) is interaction with substrate tRNA.

Belongs to the IPP transferase family. As to quaternary structure, monomer. Requires Mg(2+) as cofactor.

It catalyses the reaction adenosine(37) in tRNA + dimethylallyl diphosphate = N(6)-dimethylallyladenosine(37) in tRNA + diphosphate. Its function is as follows. Catalyzes the transfer of a dimethylallyl group onto the adenine at position 37 in tRNAs that read codons beginning with uridine, leading to the formation of N6-(dimethylallyl)adenosine (i(6)A). In Blochmanniella floridana, this protein is tRNA dimethylallyltransferase.